A 445-amino-acid chain; its full sequence is ATP synthase subunit b-delta (445 aa).

Residues 1-168 (MSTFIGQLVG…PAAAEVERPV (168 aa)) are ATP synthase subunit b. The helical transmembrane segment at 4 to 24 (FIGQLVGFAAIVFLVWRYVVP) threads the bilayer. The interval 169-445 (AAKMRSASRR…LTAAEAQLPD (277 aa)) is ATP synthase subunit delta.

The protein in the N-terminal section; belongs to the ATPase B chain family. It in the C-terminal section; belongs to the ATPase delta chain family. F-type ATPases have 2 components, F(1) - the catalytic core - and F(0) - the membrane proton channel. F(1) has five subunits: alpha(3), beta(3), gamma(1), delta(1), epsilon(1). F(0) has three main subunits: a(1), b(2) and c(10-14). The alpha and beta chains form an alternating ring which encloses part of the gamma chain. F(1) is attached to F(0) by a central stalk formed by the gamma and epsilon chains, while a peripheral stalk is formed by the delta and b chains.

It is found in the cell membrane. Functionally, f(1)F(0) ATP synthase produces ATP from ADP in the presence of a proton or sodium gradient. F-type ATPases consist of two structural domains, F(1) containing the extramembraneous catalytic core and F(0) containing the membrane proton channel, linked together by a central stalk and a peripheral stalk. During catalysis, ATP synthesis in the catalytic domain of F(1) is coupled via a rotary mechanism of the central stalk subunits to proton translocation. Its function is as follows. This fusion protein includes a component of the F(0) channel (subunit b) and of the F(1) subunit (subunit delta). Two copies of subunit b and one of delta together form the peripheral 'stator' stalk which links F(1) to F(0). The polypeptide is ATP synthase subunit b-delta (atpFH) (Mycobacterium ulcerans (strain Agy99)).